The chain runs to 509 residues: Putative ATP-dependent RNA helicase QP509L (509 aa).

Residues 110–262 form the Helicase ATP-binding domain; the sequence is KKLLSPYGRF…KIIIHHLGQP (153 aa). ATP is bound at residue 123–130; that stretch reads LNTGLGKT. The DEAH box signature appears at 215–218; it reads DEAH.

It belongs to the DEAD box helicase family. DEAH subfamily.

It carries out the reaction ATP + H2O = ADP + phosphate + H(+). This African swine fever virus (strain Badajoz 1971 Vero-adapted) (Ba71V) protein is Putative ATP-dependent RNA helicase QP509L.